A 61-amino-acid chain; its full sequence is Lens epithelial cell protein LEP503 (61 aa).

Preferentially expressed in the lens epithelial cells.

In Rattus norvegicus (Rat), this protein is Lens epithelial cell protein LEP503 (Lenep).